We begin with the raw amino-acid sequence, 935 residues long: Coatomer subunit gamma (935 aa).

5 HEAT repeats span residues 258 to 296 (PQLF…RNSR), 337 to 372 (PEKI…TGTS), 373 to 410 (KNIS…NFPQ), 412 to 449 (WKSI…FVPQ), and 524 to 562 (PTLY…ARNK). Residues 630–656 (KSETTLDTTPEAESVPEKRADANSFAG) are disordered. At T638 the chain carries Phosphothreonine. A Phosphoserine modification is found at S643. K647 is covalently cross-linked (Glycyl lysine isopeptide (Lys-Gly) (interchain with G-Cter in ubiquitin)). A Phosphoserine modification is found at S653.

It belongs to the COPG family. In terms of assembly, oligomeric complex that consists of at least the alpha, beta, beta', gamma, delta, epsilon and zeta subunits. Interacts (via C-terminus) with GEA1 (via N-terminal region) and KEI1 (via C-terminal region).

The protein localises to the cytoplasm. It is found in the golgi apparatus membrane. It localises to the cytoplasmic vesicle. The protein resides in the COPI-coated vesicle membrane. Its subcellular location is the endosome. Functionally, the coatomer is a cytosolic protein complex that binds to dilysine motifs and reversibly associates with Golgi non-clathrin-coated vesicles, which further mediate biosynthetic protein transport from the ER, via the Golgi up to the trans Golgi network. Coatomer complex is required for budding from Golgi membranes, and is essential for the retrograde Golgi-to-ER transport of dilysine-tagged proteins. This is Coatomer subunit gamma (SEC21) from Saccharomyces cerevisiae (strain ATCC 204508 / S288c) (Baker's yeast).